The sequence spans 364 residues: Spermidine/putrescine import ATP-binding protein PotA (364 aa).

One can recognise an ABC transporter domain in the interval 5 to 235 (LSFKSVSKQY…PVNRFVADFI (231 aa)). ATP is bound at residue 37–44 (GPSGCGKT).

The protein belongs to the ABC transporter superfamily. Spermidine/putrescine importer (TC 3.A.1.11.1) family. In terms of assembly, the complex is composed of two ATP-binding proteins (PotA), two transmembrane proteins (PotB and PotC) and a solute-binding protein (PotD).

Its subcellular location is the cell membrane. It carries out the reaction ATP + H2O + polyamine-[polyamine-binding protein]Side 1 = ADP + phosphate + polyamineSide 2 + [polyamine-binding protein]Side 1.. Functionally, part of the ABC transporter complex PotABCD involved in spermidine/putrescine import. Responsible for energy coupling to the transport system. In Staphylococcus saprophyticus subsp. saprophyticus (strain ATCC 15305 / DSM 20229 / NCIMB 8711 / NCTC 7292 / S-41), this protein is Spermidine/putrescine import ATP-binding protein PotA.